The primary structure comprises 446 residues: Methylenetetrahydrofolate--tRNA-(uracil-5-)-methyltransferase TrmFO (446 aa).

9–14 (GGGMAG) contributes to the FAD binding site.

This sequence belongs to the MnmG family. TrmFO subfamily. FAD serves as cofactor.

The protein localises to the cytoplasm. It catalyses the reaction uridine(54) in tRNA + (6R)-5,10-methylene-5,6,7,8-tetrahydrofolate + NADH + H(+) = 5-methyluridine(54) in tRNA + (6S)-5,6,7,8-tetrahydrofolate + NAD(+). It carries out the reaction uridine(54) in tRNA + (6R)-5,10-methylene-5,6,7,8-tetrahydrofolate + NADPH + H(+) = 5-methyluridine(54) in tRNA + (6S)-5,6,7,8-tetrahydrofolate + NADP(+). Its function is as follows. Catalyzes the folate-dependent formation of 5-methyl-uridine at position 54 (M-5-U54) in all tRNAs. The chain is Methylenetetrahydrofolate--tRNA-(uracil-5-)-methyltransferase TrmFO from Ruegeria sp. (strain TM1040) (Silicibacter sp.).